The chain runs to 380 residues: Cytochrome b (380 aa).

The next 4 membrane-spanning stretches (helical) occupy residues 34-54 (FGSL…LLAM), 78-99 (WLIR…YLHI), 114-134 (WNIG…GYVL), and 179-199 (FFAL…VHLT). The heme b site is built by His-84 and His-98. Residues His-183 and His-197 each contribute to the heme b site. His-202 contacts a ubiquinone. 4 helical membrane-spanning segments follow: residues 227–247 (IKDM…ALFS), 289–309 (LGGV…PLLH), 321–341 (LLPF…WVGS), and 348–368 (FIII…VLFP).

It belongs to the cytochrome b family. The cytochrome bc1 complex contains 11 subunits: 3 respiratory subunits (MT-CYB, CYC1 and UQCRFS1), 2 core proteins (UQCRC1 and UQCRC2) and 6 low-molecular weight proteins (UQCRH/QCR6, UQCRB/QCR7, UQCRQ/QCR8, UQCR10/QCR9, UQCR11/QCR10 and a cleavage product of UQCRFS1). This cytochrome bc1 complex then forms a dimer. The cofactor is heme b.

The protein localises to the mitochondrion inner membrane. In terms of biological role, component of the ubiquinol-cytochrome c reductase complex (complex III or cytochrome b-c1 complex) that is part of the mitochondrial respiratory chain. The b-c1 complex mediates electron transfer from ubiquinol to cytochrome c. Contributes to the generation of a proton gradient across the mitochondrial membrane that is then used for ATP synthesis. The protein is Cytochrome b (MT-CYB) of Gymnorhina tibicen (Australian magpie).